A 211-amino-acid chain; its full sequence is Imidazole glycerol phosphate synthase subunit HisH (211 aa).

Positions V3–V211 constitute a Glutamine amidotransferase type-1 domain. C81 (nucleophile) is an active-site residue. Active-site residues include H186 and E188.

In terms of assembly, heterodimer of HisH and HisF.

It localises to the cytoplasm. It carries out the reaction 5-[(5-phospho-1-deoxy-D-ribulos-1-ylimino)methylamino]-1-(5-phospho-beta-D-ribosyl)imidazole-4-carboxamide + L-glutamine = D-erythro-1-(imidazol-4-yl)glycerol 3-phosphate + 5-amino-1-(5-phospho-beta-D-ribosyl)imidazole-4-carboxamide + L-glutamate + H(+). The enzyme catalyses L-glutamine + H2O = L-glutamate + NH4(+). The protein operates within amino-acid biosynthesis; L-histidine biosynthesis; L-histidine from 5-phospho-alpha-D-ribose 1-diphosphate: step 5/9. Its function is as follows. IGPS catalyzes the conversion of PRFAR and glutamine to IGP, AICAR and glutamate. The HisH subunit catalyzes the hydrolysis of glutamine to glutamate and ammonia as part of the synthesis of IGP and AICAR. The resulting ammonia molecule is channeled to the active site of HisF. This chain is Imidazole glycerol phosphate synthase subunit HisH, found in Cyanothece sp. (strain PCC 7425 / ATCC 29141).